A 234-amino-acid chain; its full sequence is uncharacterized protein (234 aa).

The span at 1 to 12 shows a compositional bias: low complexity; that stretch reads MGSSSSSSLNNS. Residues 1–184 are disordered; that stretch reads MGSSSSSSLN…TPYLSGANSR (184 aa). Composition is skewed to polar residues over residues 21 to 40 and 52 to 64; these read TPES…SILS and KSTS…NLTP. A compositionally biased stretch (low complexity) spans 66-77; the sequence is KSRWSFSSSKKS. Over residues 105–120 the composition is skewed to polar residues; sequence GDFTPSLGNTPKSSFS. Over residues 152 to 167 the composition is skewed to basic and acidic residues; that stretch reads LGELFRDSIREEREES.

In terms of assembly, interacts with RLK902. As to expression, expressed in stems, rosette leaves and roots and weakly in inflorescences.

This is an uncharacterized protein from Arabidopsis thaliana (Mouse-ear cress).